A 1550-amino-acid polypeptide reads, in one-letter code: Pentafunctional AROM polypeptide (1550 aa).

Residues 1–379 (MSIERVPILG…YQLKAHQVSK (379 aa)) form a 3-dehydroquinate synthase region. NAD(+)-binding positions include 42-44 (DTN), 80-83 (ENNK), 111-113 (GGV), and D116. R127 is a binding site for 7-phospho-2-dehydro-3-deoxy-D-arabino-heptonate. NAD(+) is bound at residue 136–137 (TT). The 7-phospho-2-dehydro-3-deoxy-D-arabino-heptonate site is built by D143 and K149. K158 lines the NAD(+) pocket. N159 contributes to the 7-phospho-2-dehydro-3-deoxy-D-arabino-heptonate binding site. Residues 176 to 179 (FLET) and N187 each bind NAD(+). Residue E191 coordinates Zn(2+). 7-phospho-2-dehydro-3-deoxy-D-arabino-heptonate-binding positions include 191-194 (EVVK) and K243. E253 functions as the Proton acceptor; for 3-dehydroquinate synthase activity in the catalytic mechanism. Residues 257-261 (RNLLN) and H264 each bind 7-phospho-2-dehydro-3-deoxy-D-arabino-heptonate. H264 lines the Zn(2+) pocket. H268 acts as the Proton acceptor; for 3-dehydroquinate synthase activity in catalysis. The 7-phospho-2-dehydro-3-deoxy-D-arabino-heptonate site is built by H280 and K351. H280 contacts Zn(2+). The segment at 392–837 (VHPFTNPPKE…WDILHSKFKI (446 aa)) is EPSP synthase. Positions 857–1047 (DKGVIVIGMR…VPTGRSTAVV (191 aa)) are shikimate kinase. ATP is bound at residue 864-871 (GMRGTGKS). Positions 1048-1257 (LTLPDLNNVA…NDDGLLTIGE (210 aa)) are 3-dehydroquinase. The active-site Schiff-base intermediate with substrate; for 3-dehydroquinate dehydratase activity is the R1193. Residues 1270–1550 (AKKFWVIGSP…EIIHRAVVEE (281 aa)) are shikimate dehydrogenase.

In the N-terminal section; belongs to the sugar phosphate cyclases superfamily. Dehydroquinate synthase family. This sequence in the 2nd section; belongs to the EPSP synthase family. The protein in the 3rd section; belongs to the shikimate kinase family. It in the 4th section; belongs to the type-I 3-dehydroquinase family. In the C-terminal section; belongs to the shikimate dehydrogenase family. As to quaternary structure, homodimer. The cofactor is Zn(2+).

It localises to the cytoplasm. The enzyme catalyses 7-phospho-2-dehydro-3-deoxy-D-arabino-heptonate = 3-dehydroquinate + phosphate. It carries out the reaction 3-dehydroquinate = 3-dehydroshikimate + H2O. The catalysed reaction is shikimate + NADP(+) = 3-dehydroshikimate + NADPH + H(+). It catalyses the reaction shikimate + ATP = 3-phosphoshikimate + ADP + H(+). The enzyme catalyses 3-phosphoshikimate + phosphoenolpyruvate = 5-O-(1-carboxyvinyl)-3-phosphoshikimate + phosphate. Its pathway is metabolic intermediate biosynthesis; chorismate biosynthesis; chorismate from D-erythrose 4-phosphate and phosphoenolpyruvate: step 2/7. It participates in metabolic intermediate biosynthesis; chorismate biosynthesis; chorismate from D-erythrose 4-phosphate and phosphoenolpyruvate: step 3/7. The protein operates within metabolic intermediate biosynthesis; chorismate biosynthesis; chorismate from D-erythrose 4-phosphate and phosphoenolpyruvate: step 4/7. It functions in the pathway metabolic intermediate biosynthesis; chorismate biosynthesis; chorismate from D-erythrose 4-phosphate and phosphoenolpyruvate: step 5/7. Its pathway is metabolic intermediate biosynthesis; chorismate biosynthesis; chorismate from D-erythrose 4-phosphate and phosphoenolpyruvate: step 6/7. Functionally, the AROM polypeptide catalyzes 5 consecutive enzymatic reactions in prechorismate polyaromatic amino acid biosynthesis. This is Pentafunctional AROM polypeptide from Candida dubliniensis (strain CD36 / ATCC MYA-646 / CBS 7987 / NCPF 3949 / NRRL Y-17841) (Yeast).